We begin with the raw amino-acid sequence, 128 residues long: Cyclic ether formation enzyme gkaZ (128 aa).

The N-terminal stretch at 1–36 (MTTARALSDGLAYLLACFNAFCIQAHLTSRFSPAFS) is a signal peptide. Transmembrane regions (helical) follow at residues 61–81 (LRYM…LPGW) and 107–127 (WLLH…AIYV).

This sequence belongs to the cyclic ether formation enzyme xenC family.

It localises to the membrane. The protein operates within mycotoxin biosynthesis. In terms of biological role, cyclic ether formation enzyme; part of the gene cluster that mediates the biosynthesis of GKK1032, fungal natural products containing a macrocyclic para-cyclophane connected to a decahydrofluorene ring system that show potent antitumor activities. Within the pathway, gkaZ functions synergistically with gkaB and gkaX to form the cyclophane. The pathway begins with the PKS-NRPS gkaA which, with the help of the trans-enoyl reductase gkaC, synthesizes the polyketide-tyrosyl acyl thioester product which can be reductively off-loaded by the terminal reductase (R) domain in gkaA. The alpha/beta hydrolase gkaG is then required to catalyze the subsequent Knoevenagel condensation that affords the 3-pyrrolin-2-one ring, whereas the three proteins gkaB, gkaX and gkaZ then function synergistically to form the cyclophane. This is Cyclic ether formation enzyme gkaZ from Penicillium citrinum.